Consider the following 331-residue polypeptide: DSC E3 ubiquitin ligase complex subunit D (331 aa).

Asn26 is a glycosylation site (N-linked (GlcNAc...) asparagine). Transmembrane regions (helical) follow at residues 63–83 (ILIY…ILFA), 107–127 (PFIG…NFFT), and 159–179 (LFLL…LIVE). Residues 188–225 (STTSTEILRVQDHDSEERGVHRTRPESRSSVVGAELDE) form a disordered region. The span at 196–214 (RVQDHDSEERGVHRTRPES) shows a compositional bias: basic and acidic residues.

Component of the DSC E3 ubiquitin ligase complex composed of dscA, dscB, dscC and dscD.

It is found in the endoplasmic reticulum membrane. Its pathway is protein modification; protein ubiquitination. Component of the DSC E3 ubiquitin ligase complex which is required for the srbA transcriptional activator proteolytic cleavage to release the soluble transcription factor from the membrane in low oxygen or sterol conditions. Required for growth during hypoxia and triazole drug susceptibility, as well as for virulence in a murine model of invasive pulmonary aspergillosis (IPA). This Aspergillus fumigatus (strain ATCC MYA-4609 / CBS 101355 / FGSC A1100 / Af293) (Neosartorya fumigata) protein is DSC E3 ubiquitin ligase complex subunit D.